A 690-amino-acid polypeptide reads, in one-letter code: Rho guanine nucleotide exchange factor 4 (690 aa).

The tract at residues 73 to 126 (KTQRKKLQKQAHVERRLHIGAVHKDGVKCWRKTIITSPESLNLPRRSHPLSQSA) is ABR (APC-binding region) domain. The disordered stretch occupies residues 113 to 145 (LNLPRRSHPLSQSAPTGLNHMGWPEHTPGTAMP). The 60-residue stretch at 194–253 (GSVVCAEALWDHVTMDDQELGFKAGDVIEVMDATNREWWWGRVADGEGWFPASFVRLRVN) folds into the SH3 domain. The disordered stretch occupies residues 257 to 282 (PADDDAPLAGNSGAEDGGAEAQSSKD). The DH domain occupies 284–468 (MRTNVINEIL…KNVAQLINER (185 aa)). In terms of domain architecture, PH spans 499 to 606 (ELIYSGELTR…WLKAFARERE (108 aa)).

Isoform 3 interacts with RHOA and RAC1, and (via ABR domain) with APC. Found in a complex consisting of ARHGEF4, APC and CTNNB1. In terms of tissue distribution, expressed at high levels in the brain, skeletal muscle and testis and at low levels in the kidney, lung, small intestine, ovary and prostate. Expression is aberrantly enhanced in most colorectal tumors.

It localises to the cytoplasm. The protein localises to the cell projection. The protein resides in the ruffle membrane. Functionally, acts as a guanine nucleotide exchange factor (GEF) for RHOA, RAC1 and CDC42 GTPases. Binding of APC may activate RAC1 GEF activity. The APC-ARHGEF4 complex seems to be involved in cell migration as well as in E-cadherin-mediated cell-cell adhesion. Required for MMP9 up-regulation via the JNK signaling pathway in colorectal tumor cells. Involved in tumor angiogenesis and may play a role in intestinal adenoma formation and tumor progression. The polypeptide is Rho guanine nucleotide exchange factor 4 (ARHGEF4) (Homo sapiens (Human)).